The sequence spans 121 residues: Putative iron-sulfur cluster insertion protein ErpA (121 aa).

3 residues coordinate iron-sulfur cluster: Cys49, Cys113, and Cys115.

The protein belongs to the HesB/IscA family. In terms of assembly, homodimer. Iron-sulfur cluster is required as a cofactor.

Its function is as follows. Required for insertion of 4Fe-4S clusters. The polypeptide is Putative iron-sulfur cluster insertion protein ErpA (Nitrosomonas europaea (strain ATCC 19718 / CIP 103999 / KCTC 2705 / NBRC 14298)).